The chain runs to 215 residues: Pyrrolidone-carboxylate peptidase 1 (215 aa).

Active-site residues include Glu-80, Cys-143, and His-167.

The protein belongs to the peptidase C15 family. Homotetramer.

It is found in the cytoplasm. It carries out the reaction Release of an N-terminal pyroglutamyl group from a polypeptide, the second amino acid generally not being Pro.. Its function is as follows. Removes 5-oxoproline from various penultimate amino acid residues except L-proline. The chain is Pyrrolidone-carboxylate peptidase 1 from Ralstonia nicotianae (strain ATCC BAA-1114 / GMI1000) (Ralstonia solanacearum).